We begin with the raw amino-acid sequence, 308 residues long: HPr kinase/phosphorylase (308 aa).

Catalysis depends on residues H138 and K159. 153–160 (GESGLGKS) is an ATP binding site. Residue S160 participates in Mg(2+) binding. The Proton acceptor; for phosphorylation activity. Proton donor; for dephosphorylation activity role is filled by D177. Positions 201-210 (LEVRGLGLLD) are important for the catalytic mechanism of both phosphorylation and dephosphorylation. E202 contacts Mg(2+). The active site involves R243. The segment at 264 to 269 (QVAAGR) is important for the catalytic mechanism of dephosphorylation.

The protein belongs to the HPrK/P family. In terms of assembly, homohexamer. Requires Mg(2+) as cofactor.

It catalyses the reaction [HPr protein]-L-serine + ATP = [HPr protein]-O-phospho-L-serine + ADP + H(+). It carries out the reaction [HPr protein]-O-phospho-L-serine + phosphate + H(+) = [HPr protein]-L-serine + diphosphate. Catalyzes the ATP- as well as the pyrophosphate-dependent phosphorylation of a specific serine residue in HPr, a phosphocarrier protein of the phosphoenolpyruvate-dependent sugar phosphotransferase system (PTS). HprK/P also catalyzes the pyrophosphate-producing, inorganic phosphate-dependent dephosphorylation (phosphorolysis) of seryl-phosphorylated HPr (P-Ser-HPr). This Bordetella bronchiseptica (strain ATCC BAA-588 / NCTC 13252 / RB50) (Alcaligenes bronchisepticus) protein is HPr kinase/phosphorylase.